Here is a 954-residue protein sequence, read N- to C-terminus: Glycine dehydrogenase (decarboxylating) (954 aa).

N6-(pyridoxal phosphate)lysine is present on K700.

It belongs to the GcvP family. As to quaternary structure, the glycine cleavage system is composed of four proteins: P, T, L and H. The cofactor is pyridoxal 5'-phosphate.

The catalysed reaction is N(6)-[(R)-lipoyl]-L-lysyl-[glycine-cleavage complex H protein] + glycine + H(+) = N(6)-[(R)-S(8)-aminomethyldihydrolipoyl]-L-lysyl-[glycine-cleavage complex H protein] + CO2. The glycine cleavage system catalyzes the degradation of glycine. The P protein binds the alpha-amino group of glycine through its pyridoxal phosphate cofactor; CO(2) is released and the remaining methylamine moiety is then transferred to the lipoamide cofactor of the H protein. In Dinoroseobacter shibae (strain DSM 16493 / NCIMB 14021 / DFL 12), this protein is Glycine dehydrogenase (decarboxylating).